A 99-amino-acid chain; its full sequence is Orphan antixoxin protein TacA (99 aa).

This sequence belongs to the TacA antitoxin family.

Functionally, putative antitoxin component of a toxin-antitoxin (TA) system; its cognate toxin (usually a tRNA acetylase) is unknown. This Haemophilus influenzae (strain ATCC 51907 / DSM 11121 / KW20 / Rd) protein is Orphan antixoxin protein TacA.